The following is a 165-amino-acid chain: Nucleotide-binding protein PMT9312_0481 (165 aa).

The protein belongs to the YajQ family.

Functionally, nucleotide-binding protein. This chain is Nucleotide-binding protein PMT9312_0481, found in Prochlorococcus marinus (strain MIT 9312).